The primary structure comprises 213 residues: Phosphoribosylformylglycinamidine synthase subunit PurQ (213 aa).

A Glutamine amidotransferase type-1 domain is found at 5 to 213 (ACVVVYPGSN…FQSILNYLKR (209 aa)). The Nucleophile role is filled by C86. Active-site residues include H186 and E188.

Part of the FGAM synthase complex composed of 1 PurL, 1 PurQ and 2 PurS subunits.

It localises to the cytoplasm. The catalysed reaction is N(2)-formyl-N(1)-(5-phospho-beta-D-ribosyl)glycinamide + L-glutamine + ATP + H2O = 2-formamido-N(1)-(5-O-phospho-beta-D-ribosyl)acetamidine + L-glutamate + ADP + phosphate + H(+). It carries out the reaction L-glutamine + H2O = L-glutamate + NH4(+). It functions in the pathway purine metabolism; IMP biosynthesis via de novo pathway; 5-amino-1-(5-phospho-D-ribosyl)imidazole from N(2)-formyl-N(1)-(5-phospho-D-ribosyl)glycinamide: step 1/2. Functionally, part of the phosphoribosylformylglycinamidine synthase complex involved in the purines biosynthetic pathway. Catalyzes the ATP-dependent conversion of formylglycinamide ribonucleotide (FGAR) and glutamine to yield formylglycinamidine ribonucleotide (FGAM) and glutamate. The FGAM synthase complex is composed of three subunits. PurQ produces an ammonia molecule by converting glutamine to glutamate. PurL transfers the ammonia molecule to FGAR to form FGAM in an ATP-dependent manner. PurS interacts with PurQ and PurL and is thought to assist in the transfer of the ammonia molecule from PurQ to PurL. The sequence is that of Phosphoribosylformylglycinamidine synthase subunit PurQ from Thermotoga maritima (strain ATCC 43589 / DSM 3109 / JCM 10099 / NBRC 100826 / MSB8).